The sequence spans 144 residues: 3-hydroxyacyl-[acyl-carrier-protein] dehydratase FabZ (144 aa).

His-48 is an active-site residue.

This sequence belongs to the thioester dehydratase family. FabZ subfamily.

The protein localises to the cytoplasm. The enzyme catalyses a (3R)-hydroxyacyl-[ACP] = a (2E)-enoyl-[ACP] + H2O. In terms of biological role, involved in unsaturated fatty acids biosynthesis. Catalyzes the dehydration of short chain beta-hydroxyacyl-ACPs and long chain saturated and unsaturated beta-hydroxyacyl-ACPs. The sequence is that of 3-hydroxyacyl-[acyl-carrier-protein] dehydratase FabZ from Listeria monocytogenes serotype 4b (strain CLIP80459).